Reading from the N-terminus, the 262-residue chain is tRNA (guanine-N(1)-)-methyltransferase (262 aa).

S-adenosyl-L-methionine-binding positions include G113 and 137 to 142 (IGDYVL).

The protein belongs to the RNA methyltransferase TrmD family. As to quaternary structure, homodimer.

It is found in the cytoplasm. It catalyses the reaction guanosine(37) in tRNA + S-adenosyl-L-methionine = N(1)-methylguanosine(37) in tRNA + S-adenosyl-L-homocysteine + H(+). Functionally, specifically methylates guanosine-37 in various tRNAs. The chain is tRNA (guanine-N(1)-)-methyltransferase from Thermobifida fusca (strain YX).